We begin with the raw amino-acid sequence, 478 residues long: Microfibrillar-associated protein 1 (478 aa).

Low complexity predominate over residues 1–20 (MSAATAAAAASGIQSTAGAI). Disordered regions lie at residues 1–276 (MSAA…RRAT) and 456–478 (NEHA…KKME). The span at 53 to 62 (SSEESDDDDF) shows a compositional bias: acidic residues. A compositionally biased stretch (basic and acidic residues) spans 107–128 (DDPRLRRLRQRPVDMEDMERER). Residues 140 to 153 (IMESDSEDEEEDEG) show a composition bias toward acidic residues. Over residues 160–170 (RGTNKITLASE) the composition is skewed to polar residues. The span at 171-181 (SDTDAELSDTE) shows a compositional bias: acidic residues. A compositionally biased stretch (basic and acidic residues) spans 197–212 (QREEEVLQKEDEKQSE). Acidic residues predominate over residues 214-231 (SESESSEYEEETESEEDN). The interaction with Prp38 stretch occupies residues 229 to 478 (EDNEPRLKPL…PTGSKRKKME (250 aa)). Residues 245-268 (RATIQEKEREAQKQKQLEAEAKRA) are compositionally biased toward basic and acidic residues.

Belongs to the MFAP1 family. In terms of assembly, component of the spliceosome B complex. Interacts (via C-terminus) with Prp38.

The protein resides in the nucleus. In terms of biological role, required for pre-mRNA splicing. This is Microfibrillar-associated protein 1 from Drosophila melanogaster (Fruit fly).